The following is a 410-amino-acid chain: MEGESTTAVLSGFVLGALAFQHLNTDSDTEGFLLGEVKGEAKNSITDSQMDDVEVIYTIDIQKYISCYQLFSFYNSSGEVNEQALKKILSNVKKDVVGWYKLRRHSDQIMTFRERLLHRNLQQHLSSQELVFLLLTPSIITESCSTHRLEHALYKPQKGLFHRIPLVVANLGMSEQLGYKTTSGSCTSAGFSRAVKTHSSEFFKEDGSLKEVQKINEMYTSLQDELKSICEKVEHSERAVEKLLNDVNRLKGEIKKRKQAQMQATREKNVQKDPQENILLCQALRTFFPDCELLHSCVISLKNRRISGSSCTTTHPLSGVDNLTLMVEYTDFPEASPARSALLVTKRKASDTDDGWQFKKSRLGGIQNRPSKTDTNSSNQEQASTVSSPETDEEIERMKGSGEYPQSPTF.

In terms of domain architecture, MPN spans 7–160; it reads TAVLSGFVLG…HALYKPQKGL (154 aa). Phosphoserine is present on S48. A coiled-coil region spans residues 208-261; the sequence is SLKEVQKINEMYTSLQDELKSICEKVEHSERAVEKLLNDVNRLKGEIKKRKQAQ. The disordered stretch occupies residues 354-410; the sequence is DGWQFKKSRLGGIQNRPSKTDTNSSNQEQASTVSSPETDEEIERMKGSGEYPQSPTF. Residues 368–389 show a composition bias toward polar residues; sequence NRPSKTDTNSSNQEQASTVSSP. 2 positions are modified to phosphoserine: S387 and S388. T391 carries the post-translational modification Phosphothreonine. A Phosphoserine modification is found at S407. The short motif at 407-410 is the pSXXF motif element; it reads SPTF.

Belongs to the FAM175 family. Abraxas subfamily. In terms of assembly, component of the ARISC complex, at least composed of UIMC1/RAP80, ABRAXAS1, BRCC3/BRCC36, BABAM2 and BABAM1/NBA1. Component of the BRCA1-A complex, at least composed of the BRCA1, BARD1, UIMC1/RAP80, ABRAXAS1, BRCC3/BRCC36, BABAM2 and BABAM1/NBA1. In the complex, interacts directly with UIMC1/RAP80, BRCC3/BRCC36 and BABAM2. Homodimer. Interacts directly (when phosphorylated at Ser-407) with BRCA1. The phosphorylated homodimer can interact directly with two BRCA1 chains, giving rise to a heterotetramer. Binds polyubiquitin. Post-translationally, phosphorylation of Ser-407 of the pSXXF motif by ATM or ATR constitutes a specific recognition motif for the BRCT domain of BRCA1.

Its subcellular location is the nucleus. Its function is as follows. Involved in DNA damage response and double-strand break (DSB) repair. Component of the BRCA1-A complex, acting as a central scaffold protein that assembles the various components of the complex and mediates the recruitment of BRCA1. The BRCA1-A complex specifically recognizes 'Lys-63'-linked ubiquitinated histones H2A and H2AX at DNA lesion sites, leading to target the BRCA1-BARD1 heterodimer to sites of DNA damage at DSBs. This complex also possesses deubiquitinase activity that specifically removes 'Lys-63'-linked ubiquitin on histones H2A and H2AX. This chain is BRCA1-A complex subunit Abraxas 1, found in Bos taurus (Bovine).